Here is a 414-residue protein sequence, read N- to C-terminus: ORC1-type DNA replication protein 1 (414 aa).

ATP-binding positions include 70 to 74, Tyr-213, and Arg-225; that span reads TGKTA.

This sequence belongs to the CDC6/cdc18 family.

Involved in regulation of DNA replication. The sequence is that of ORC1-type DNA replication protein 1 (cdc6-1) from Methanosarcina mazei (strain ATCC BAA-159 / DSM 3647 / Goe1 / Go1 / JCM 11833 / OCM 88) (Methanosarcina frisia).